A 215-amino-acid chain; its full sequence is Cytochrome b6 (215 aa).

Residues 32–52 (IFYCLGGITLTCFLVQVATGF) traverse the membrane as a helical segment. Cysteine 35 serves as a coordination point for heme c. Residues histidine 86 and histidine 100 each contribute to the heme b site. Transmembrane regions (helical) follow at residues 90 to 110 (ASMM…TGGF), 116 to 136 (LTWV…VTGY), and 186 to 206 (LHTF…FSMI). 2 residues coordinate heme b: histidine 187 and histidine 202.

It belongs to the cytochrome b family. PetB subfamily. In terms of assembly, the 4 large subunits of the cytochrome b6-f complex are cytochrome b6, subunit IV (17 kDa polypeptide, PetD), cytochrome f and the Rieske protein, while the 4 small subunits are PetG, PetL, PetM and PetN. The complex functions as a dimer. Heme b is required as a cofactor. Requires heme c as cofactor.

It is found in the plastid. The protein localises to the chloroplast thylakoid membrane. Its function is as follows. Component of the cytochrome b6-f complex, which mediates electron transfer between photosystem II (PSII) and photosystem I (PSI), cyclic electron flow around PSI, and state transitions. This chain is Cytochrome b6, found in Piper cenocladum (Ant piper).